Here is a 412-residue protein sequence, read N- to C-terminus: P-selectin glycoprotein ligand 1 (412 aa).

A signal peptide spans 1–17 (MPLQLLLLLILLGPGNS). Positions 18-41 (LQLWDTWADEAEKALGPLLARDRR) are excised as a propeptide. The Extracellular segment spans residues 18 to 320 (LQLWDTWADE…APDHISVKQC (303 aa)). A Pyrrolidone carboxylic acid modification is found at glutamine 42. A sulfotyrosine mark is found at tyrosine 46, tyrosine 48, and tyrosine 51. The disordered stretch occupies residues 56–95 (ETEPPEMLRNSTDTTPLTGPGTPESTTVEPAARRSTGLDA). An O-linked (GalNAc...) threonine glycan is attached at threonine 57. A glycan (N-linked (GlcNAc...) asparagine) is linked at asparagine 65. The span at 66-82 (STDTTPLTGPGTPESTT) shows a compositional bias: low complexity. N-linked (GlcNAc...) asparagine glycosylation is present at asparagine 111. 12 tandem repeats follow at residues 122–131 (QTTQPAATEA), 132–141 (QTTQPVPTEA), 142–151 (QTTPLAATEA), 162–171 (QTTPLAATEA), 182–191 (QTTQPTGLEA), 192–201 (QTTAPAAMEA), 202–211 (QTTAPAAMEA), 212–221 (QTTPPAAMEA), 222–231 (QTTQTTAMEA), 232–241 (QTTAPEATEA), 242–251 (QTTQPTATEA), and 252–261 (QTTPLAAMEA). Positions 122–261 (QTTQPAATEA…QTTPLAAMEA (140 aa)) are 12 X 10 AA tandem repeats. Disordered stretches follow at residues 125 to 146 (QPAA…TTPL) and 166 to 252 (LAAT…TEAQ). A glycan (N-linked (GlcNAc...) asparagine) is linked at asparagine 302. Residues 321-341 (LLAILILALVATIFFVCTVVL) traverse the membrane as a helical segment. Residues 342–412 (AVRLSRKGHM…DDLTLHSFLP (71 aa)) are Cytoplasmic-facing. The tract at residues 374-412 (EGPSATANGGLSKAKSPGLTPEPREDREGDDLTLHSFLP) is disordered. Residues 395–406 (EPREDREGDDLT) are compositionally biased toward basic and acidic residues. Residue threonine 406 is modified to Phosphothreonine. Serine 409 is subject to Phosphoserine.

Homodimer; disulfide-linked. Interaction with P-, E- and L-selectins, through their lectin/EGF domains, is required for promoting recruitment and rolling of leukocytes. These interactions require sialyl Lewis X glycan modification but there is a differing dependence for tyrosine sulfations. Sulfation on Tyr-51 of PSGL1 is most important for high affinity L-selectin/SELL binding while P-selectin/SELP requires sulfation on Tyr-48. E-selectin/SELE binds with much lower affinity and requires the sLe(x) epitope, but apparently not tyrosine sulfation. Dimerization appears not to be required for P-selectin/SELP binding. Interacts with SNX20. Interacts with MSN and SYK; mediates the activation of SYK by SELPLG. Interacts with HAVCR1. In terms of assembly, (Microbial infection) Interacts with enterovirus 71 capsid proteins. As to quaternary structure, (Microbial infection) Interacts with Staphylococcus aureus proteins SSL5 and SSL11; these interactions prevent SELPLG-mediated neutrophil rolling. Post-translationally, displays complex, core-2, sialylated and fucosylated O-linked oligosaccharides, at least some of which appear to contain poly-N-acetyllactosamine with varying degrees of substitution. Mainly disialylated or neutral forms of the core-2 tetrasaccharide, Galbeta1--&gt;4GlcNAcbeta1--&gt;6(Galbeta1--&gt;3)GalNAcOH. The GlcN:GalN ratio is approximately 2:1 and the Man:Fuc ratio 3:5. Contains about 14% fucose with alpha-1,3 linkage present in two forms: One species is a disialylated, monofucosylated glycan, and the other, a monosialylated, trifucosylated glycan with a polylactosamine backbone. The fucosylated forms carry the Lewis antigen and are important for interaction with selectins and for functioning in leukocyte rolling. The modification containing the sialyl Lewis X glycan is on Thr-57. No sulfated O-glycans. Some N-glycosylation. Sulfation, in conjunction with the SLe(x)-containing glycan, is necessary for P- and L-selectin binding. High affinity P-selectin binding has a preferred requirement for the isomer sulfated on both Tyr-48 and Tyr-51, whereas L-selectin binding requires predominantly sulfation on Tyr-51 with sulfation on Tyr-48 playing only a minor role. These sulfations play an important role in L- and P-selectin-mediated neutrophil recruitment, and leukocyte rolling. In terms of tissue distribution, expressed on neutrophils, monocytes and most lymphocytes.

It localises to the membrane. An SLe(x)-type proteoglycan, which through high affinity, calcium-dependent interactions with E-, P- and L-selectins, mediates rapid rolling of leukocytes over vascular surfaces during the initial steps in inflammation. Critical for the initial leukocyte capture. Its function is as follows. (Microbial infection) Acts as a receptor for enterovirus 71. The polypeptide is P-selectin glycoprotein ligand 1 (SELPLG) (Homo sapiens (Human)).